The chain runs to 194 residues: Molybdenum cofactor guanylyltransferase (194 aa).

GTP is bound by residues Leu12–Gly14, Lys25, Asp71, and Asp101. Asp101 contacts Mg(2+).

It belongs to the MobA family. Monomer. It depends on Mg(2+) as a cofactor.

The protein resides in the cytoplasm. The catalysed reaction is Mo-molybdopterin + GTP + H(+) = Mo-molybdopterin guanine dinucleotide + diphosphate. In terms of biological role, transfers a GMP moiety from GTP to Mo-molybdopterin (Mo-MPT) cofactor (Moco or molybdenum cofactor) to form Mo-molybdopterin guanine dinucleotide (Mo-MGD) cofactor. This is Molybdenum cofactor guanylyltransferase from Salmonella typhimurium (strain LT2 / SGSC1412 / ATCC 700720).